The following is a 270-amino-acid chain: MEYIKKIALYMSVLLLIIFIGGCGNMKEEQKKEANTNKTDSKEEKIKKSFAKTLDMYPIKNLEELYDKEGYRDGEFEKGDKGMWTIYTDFAKSNKPGELSNEGMVLYLDRNTRTAKGYYFVRTFYRKDKLPDRKNYKVEMKNNKIILLDKVEDPNLKKRIENFKFFGQYANLKELKNYSNGDVSINENVPSYDVKYKMSNKDENVKQLRSRYNIPTDKSPVLKMHIDGNLKGSSVGDRKLEIDFSKRENSHLSVIDSLDYQPAKVDEDER.

Positions 1-22 (MEYIKKIALYMSVLLLIIFIGG) are cleaved as a signal peptide. C23 carries N-palmitoyl cysteine lipidation. C23 carries the S-diacylglycerol cysteine lipid modification.

This sequence belongs to the staphylococcal tandem lipoprotein family.

It is found in the cell membrane. This is an uncharacterized protein from Staphylococcus aureus (strain N315).